We begin with the raw amino-acid sequence, 178 residues long: MGDPRRLGKKYDTPNHPWIGERIQKEREISQKYGLVNKKELWKMETQLRNYRRQARKLISDTTTQGGKEAVQLFNVLKRYAILVEQEPTLDHVLSLDIESILERRLQTIVYRKGLAKTAKQARQFIVHGHIAVNGKRVTAPAYLVSVAENDAIEYVPNSPMASENHPERTAAVSEENQ.

The S4 RNA-binding domain maps to 104-166; that stretch reads RRLQTIVYRK…PNSPMASENH (63 aa). A disordered region spans residues 158-178; sequence NSPMASENHPERTAAVSEENQ.

The protein belongs to the universal ribosomal protein uS4 family. As to quaternary structure, part of the 30S ribosomal subunit. Contacts protein S5. The interaction surface between S4 and S5 is involved in control of translational fidelity.

One of the primary rRNA binding proteins, it binds directly to 16S rRNA where it nucleates assembly of the body of the 30S subunit. Functionally, with S5 and S12 plays an important role in translational accuracy. In Methanococcus maripaludis (strain C6 / ATCC BAA-1332), this protein is Small ribosomal subunit protein uS4.